Consider the following 127-residue polypeptide: Large ribosomal subunit protein bL19 (127 aa).

This sequence belongs to the bacterial ribosomal protein bL19 family.

This protein is located at the 30S-50S ribosomal subunit interface and may play a role in the structure and function of the aminoacyl-tRNA binding site. The protein is Large ribosomal subunit protein bL19 of Ruegeria pomeroyi (strain ATCC 700808 / DSM 15171 / DSS-3) (Silicibacter pomeroyi).